A 725-amino-acid polypeptide reads, in one-letter code: Polyribonucleotide nucleotidyltransferase (725 aa).

Residues Asp-487 and Asp-493 each coordinate Mg(2+). Positions 554–613 constitute a KH domain; sequence PRIETMQIPTDKIREVIGTGGKVIREIVEKTGAKIDIQDTGVVKIASSDGKAIKAAYNWI. The 69-residue stretch at 623–691 folds into the S1 motif domain; that stretch reads GMIYDGTVVK…ERGKIRLSMK (69 aa). Residues 699-725 are disordered; the sequence is EDLTEKLKAEREADRNRERQARQSAGE. Residues 701-719 show a composition bias toward basic and acidic residues; it reads LTEKLKAEREADRNRERQA.

It belongs to the polyribonucleotide nucleotidyltransferase family. Mg(2+) is required as a cofactor.

The protein localises to the cytoplasm. The enzyme catalyses RNA(n+1) + phosphate = RNA(n) + a ribonucleoside 5'-diphosphate. Functionally, involved in mRNA degradation. Catalyzes the phosphorolysis of single-stranded polyribonucleotides processively in the 3'- to 5'-direction. The protein is Polyribonucleotide nucleotidyltransferase of Methylobacterium sp. (strain 4-46).